An 88-amino-acid chain; its full sequence is Cell division topological specificity factor (88 aa).

This sequence belongs to the MinE family.

Functionally, prevents the cell division inhibition by proteins MinC and MinD at internal division sites while permitting inhibition at polar sites. This ensures cell division at the proper site by restricting the formation of a division septum at the midpoint of the long axis of the cell. The chain is Cell division topological specificity factor from Paracidovorax citrulli (strain AAC00-1) (Acidovorax citrulli).